The primary structure comprises 596 residues: Transketolase-like protein 1 (596 aa).

His-46 is a binding site for substrate. Thiamine diphosphate-binding positions include Ser-49 and 94-96 (GWL). Asp-126 contributes to the Mg(2+) binding site. Thiamine diphosphate is bound by residues Gly-127 and Asn-156. Mg(2+)-binding residues include Asn-156 and Leu-158. Thiamine diphosphate contacts are provided by Lys-218 and His-232. Residues His-232, Arg-292, and Ser-319 each contribute to the substrate site. Positions 340 and 366 each coordinate thiamine diphosphate. Glu-340 serves as the catalytic Proton donor. 2 residues coordinate substrate: His-390 and Asp-398. Gln-402 lines the thiamine diphosphate pocket. A substrate-binding site is contributed by Arg-448.

The protein belongs to the transketolase family. As to quaternary structure, homodimer. It depends on Mg(2+) as a cofactor. Ca(2+) serves as cofactor. Mn(2+) is required as a cofactor. Requires Co(2+) as cofactor. The cofactor is thiamine diphosphate.

The protein resides in the cytoplasm. The enzyme catalyses D-sedoheptulose 7-phosphate + D-glyceraldehyde 3-phosphate = aldehydo-D-ribose 5-phosphate + D-xylulose 5-phosphate. Functionally, catalyzes the transfer of a two-carbon ketol group from a ketose donor to an aldose acceptor, via a covalent intermediate with the cofactor thiamine pyrophosphate. In Macaca fascicularis (Crab-eating macaque), this protein is Transketolase-like protein 1 (TKTL1).